Here is a 105-residue protein sequence, read N- to C-terminus: Heat shock protein HspQ (105 aa).

This sequence belongs to the HspQ family.

The protein localises to the cytoplasm. Its function is as follows. Involved in the degradation of certain denaturated proteins, including DnaA, during heat shock stress. This Baumannia cicadellinicola subsp. Homalodisca coagulata protein is Heat shock protein HspQ.